The primary structure comprises 412 residues: 43 kDa receptor-associated protein of the synapse (412 aa).

A lipid anchor (N-myristoyl glycine) is attached at G2. 7 TPR repeats span residues T6 to L39, L83 to R116, G123 to N156, C163 to Y196, A206 to H239, A246 to I279, and V286 to V319. Y196 carries the post-translational modification Phosphotyrosine. The segment at C363–R403 adopts an RING-type zinc-finger fold. The residue at position 405 (S405) is a Phosphoserine.

This sequence belongs to the RAPsyn family. In terms of processing, ubiquitinated by the BCR(KLHL8) complex, leading to its degradation.

The protein resides in the cell membrane. It is found in the postsynaptic cell membrane. The protein localises to the cytoplasm. It localises to the cytoskeleton. Its function is as follows. Postsynaptic protein required for clustering of nicotinic acetylcholine receptors (nAChRs) at the neuromuscular junction. It may link the receptor to the underlying postsynaptic cytoskeleton, possibly by direct association with actin or spectrin. The polypeptide is 43 kDa receptor-associated protein of the synapse (RAPSN) (Homo sapiens (Human)).